Reading from the N-terminus, the 251-residue chain is Small ribosomal subunit protein uS2 (251 aa).

This sequence belongs to the universal ribosomal protein uS2 family.

This is Small ribosomal subunit protein uS2 from Nitrosomonas eutropha (strain DSM 101675 / C91 / Nm57).